Consider the following 346-residue polypeptide: Serpentine receptor class gamma-20 (346 aa).

7 consecutive transmembrane segments (helical) span residues 27–47, 69–89, 106–128, 157–177, 212–232, 254–274, and 279–299; these read VMLS…SAVL, FFVL…IEVL, PFFF…CLAF, ILAP…WNIL, IPCL…LTML, TMLF…LPGI, and LLIS…ALIL.

It belongs to the nematode receptor-like protein srg family.

The protein localises to the membrane. The sequence is that of Serpentine receptor class gamma-20 (srg-20) from Caenorhabditis elegans.